The sequence spans 690 residues: Eukaryotic translation initiation factor 3 subunit B (690 aa).

Over residues 1-11 (MAKKKSEDHSG) the composition is skewed to basic and acidic residues. The tract at residues 1-37 (MAKKKSEDHSGGDANDSDYNEEPNFEDPPNFVDNISD) is disordered. The segment covering 15–25 (NDSDYNEEPNF) has biased composition (acidic residues). Residues 57–141 (SVVVVDNIPK…HTFAVNLFTD (85 aa)) enclose the RRM domain. WD repeat units lie at residues 207 to 246 (TRER…KIQK), 247 to 289 (FPHT…EKRS), 293 to 331 (DGMS…LLDL), 334 to 369 (IKIP…TLME), 442 to 484 (EIRE…KPSL), and 530 to 575 (PDHF…IKRT). The stretch at 614-645 (QKDRLRLTRASKELLEKRSQLRETFMEYRNKR) forms a coiled coil.

Belongs to the eIF-3 subunit B family. In terms of assembly, component of the eukaryotic translation initiation factor 3 (eIF-3) complex. The eIF-3 complex interacts with pix. Interacts with mxt.

Its subcellular location is the cytoplasm. Functionally, RNA-binding component of the eukaryotic translation initiation factor 3 (eIF-3) complex, which is involved in protein synthesis of a specialized repertoire of mRNAs and, together with other initiation factors, stimulates binding of mRNA and methionyl-tRNAi to the 40S ribosome. The eIF-3 complex specifically targets and initiates translation of a subset of mRNAs involved in cell proliferation. In Drosophila pseudoobscura pseudoobscura (Fruit fly), this protein is Eukaryotic translation initiation factor 3 subunit B.